Consider the following 316-residue polypeptide: Acetaldehyde dehydrogenase (316 aa).

11–14 (SGNI) contacts NAD(+). Cys-131 (acyl-thioester intermediate) is an active-site residue. NAD(+)-binding positions include 162–170 (SAGPGTRAN) and Asn-289.

The protein belongs to the acetaldehyde dehydrogenase family. In terms of assembly, interacts with MhpE.

The catalysed reaction is acetaldehyde + NAD(+) + CoA = acetyl-CoA + NADH + H(+). The protein operates within aromatic compound metabolism; 3-phenylpropanoate degradation. Catalyzes the conversion of acetaldehyde to acetyl-CoA, using NAD(+) and coenzyme A. Is the final enzyme in the meta-cleavage pathway for the degradation of aromatic compounds. The polypeptide is Acetaldehyde dehydrogenase (Klebsiella pneumoniae (strain 342)).